The following is a 288-amino-acid chain: 4-diphosphocytidyl-2-C-methyl-D-erythritol kinase (288 aa).

Lysine 22 is a catalytic residue. 104–114 is an ATP binding site; that stretch reads PSQAGLGGGSS. Aspartate 146 is an active-site residue.

This sequence belongs to the GHMP kinase family. IspE subfamily.

It carries out the reaction 4-CDP-2-C-methyl-D-erythritol + ATP = 4-CDP-2-C-methyl-D-erythritol 2-phosphate + ADP + H(+). Its pathway is isoprenoid biosynthesis; isopentenyl diphosphate biosynthesis via DXP pathway; isopentenyl diphosphate from 1-deoxy-D-xylulose 5-phosphate: step 3/6. Its function is as follows. Catalyzes the phosphorylation of the position 2 hydroxy group of 4-diphosphocytidyl-2C-methyl-D-erythritol. In Protochlamydia amoebophila (strain UWE25), this protein is 4-diphosphocytidyl-2-C-methyl-D-erythritol kinase.